A 113-amino-acid polypeptide reads, in one-letter code: Ribonuclease P protein component (113 aa).

This sequence belongs to the RnpA family. As to quaternary structure, consists of a catalytic RNA component (M1 or rnpB) and a protein subunit.

It carries out the reaction Endonucleolytic cleavage of RNA, removing 5'-extranucleotides from tRNA precursor.. Its function is as follows. RNaseP catalyzes the removal of the 5'-leader sequence from pre-tRNA to produce the mature 5'-terminus. It can also cleave other RNA substrates such as 4.5S RNA. The protein component plays an auxiliary but essential role in vivo by binding to the 5'-leader sequence and broadening the substrate specificity of the ribozyme. The sequence is that of Ribonuclease P protein component from Ureaplasma parvum serovar 3 (strain ATCC 27815 / 27 / NCTC 11736).